The primary structure comprises 531 residues: UDP-glucuronosyltransferase 1A7 (531 aa).

Positions 1-25 are cleaved as a signal peptide; sequence MAPADFPASLPLCVCLLLASGLAQA. N293 and N431 each carry an N-linked (GlcNAc...) asparagine glycan. The helical transmembrane segment at 489–509 threads the bilayer; the sequence is VIGFLLAIVLTVVFIVFKCCA.

It belongs to the UDP-glycosyltransferase family. In terms of assembly, homodimer. Homooligomer. Interacts with UGT1A1, UGT1A3, UGT1A4, UGT1A6, UGT1A8, UGT1A9 and UGT1A10 to form heterodimers. As to expression, widely expressed with highest levels detected in colon and kidney.

It localises to the endoplasmic reticulum membrane. The catalysed reaction is glucuronate acceptor + UDP-alpha-D-glucuronate = acceptor beta-D-glucuronoside + UDP + H(+). It catalyses the reaction 17alpha-estradiol + UDP-alpha-D-glucuronate = 17alpha-estradiol 3-O-(beta-D-glucuronate) + UDP + H(+). It carries out the reaction prunetin + UDP-alpha-D-glucuronate = prunetin-5-O-beta-D-glucuronide + UDP. The enzyme catalyses 5-epi-5-F2t-IsoP + UDP-alpha-D-glucuronate = 5-epi-5-F2t-IsoP-glucuronide + UDP + H(+). The catalysed reaction is (E)-ferulate + UDP-alpha-D-glucuronate = (E)-ferulic acid beta-D-glucuronate ester + UDP. It catalyses the reaction candesartan + UDP-alpha-D-glucuronate = candesartan O-beta-D-glucuronoside + UDP. It carries out the reaction SN-38 + UDP-alpha-D-glucuronate = SN-38 O-beta-D-glucuronide + UDP + H(+). The enzyme catalyses mycophenolate + UDP-alpha-D-glucuronate = mycophenolate 7-O-beta-D-glucuronide + UDP + H(+). UDP-glucuronosyltransferase (UGT) that catalyzes phase II biotransformation reactions in which lipophilic substrates are conjugated with glucuronic acid to increase the metabolite's water solubility, thereby facilitating excretion into either the urine or bile. Essential for the elimination and detoxification of drugs, xenobiotics and endogenous compounds. Catalyzes the glucuronidation of endogenous estrogen hormone epiestradiol. Involved in the glucuronidation of F2-isoprostane (5-epi-5-F2t-IsoP). Involved in the glucuronidation of the phytochemical ferulic acid at the carboxylic acid group. Also catalyzes the glucuronidation of the isoflavones genistein, daidzein, glycitein, formononetin, biochanin A and prunetin, which are phytoestrogens with anticancer and cardiovascular properties. Involved in the glucuronidation of the AGTR1 angiotensin receptor antagonist caderastan, a drug which can inhibit the effect of angiotensin II. Involved in the biotransformation of 7-ethyl-10-hydroxycamptothecin (SN-38), the pharmacologically active metabolite of the anticancer drug irinotecan. Also metabolizes mycophenolate, an immunosuppressive agent. The protein is UDP-glucuronosyltransferase 1A7 of Mus musculus (Mouse).